The primary structure comprises 300 residues: Aspartate carbamoyltransferase catalytic subunit (300 aa).

2 residues coordinate carbamoyl phosphate: R50 and T51. Residue K78 coordinates L-aspartate. 3 residues coordinate carbamoyl phosphate: R100, H127, and Q130. R160 and R210 together coordinate L-aspartate. Carbamoyl phosphate contacts are provided by A253 and P254.

The protein belongs to the aspartate/ornithine carbamoyltransferase superfamily. ATCase family. In terms of assembly, heterododecamer (2C3:3R2) of six catalytic PyrB chains organized as two trimers (C3), and six regulatory PyrI chains organized as three dimers (R2).

The catalysed reaction is carbamoyl phosphate + L-aspartate = N-carbamoyl-L-aspartate + phosphate + H(+). It participates in pyrimidine metabolism; UMP biosynthesis via de novo pathway; (S)-dihydroorotate from bicarbonate: step 2/3. Catalyzes the condensation of carbamoyl phosphate and aspartate to form carbamoyl aspartate and inorganic phosphate, the committed step in the de novo pyrimidine nucleotide biosynthesis pathway. The protein is Aspartate carbamoyltransferase catalytic subunit of Staphylococcus saprophyticus subsp. saprophyticus (strain ATCC 15305 / DSM 20229 / NCIMB 8711 / NCTC 7292 / S-41).